Consider the following 218-residue polypeptide: Octanoyltransferase (218 aa).

A BPL/LPL catalytic domain is found at 32–214; the sequence is VLTADEIWLV…HFTQLLGYND (183 aa). Residues 71-78, 143-145, and 156-158 contribute to the substrate site; these read RGGQITYH, SLG, and GLA. Cys-174 serves as the catalytic Acyl-thioester intermediate.

The protein belongs to the LipB family.

Its subcellular location is the cytoplasm. The enzyme catalyses octanoyl-[ACP] + L-lysyl-[protein] = N(6)-octanoyl-L-lysyl-[protein] + holo-[ACP] + H(+). It functions in the pathway protein modification; protein lipoylation via endogenous pathway; protein N(6)-(lipoyl)lysine from octanoyl-[acyl-carrier-protein]: step 1/2. In terms of biological role, catalyzes the transfer of endogenously produced octanoic acid from octanoyl-acyl-carrier-protein onto the lipoyl domains of lipoate-dependent enzymes. Lipoyl-ACP can also act as a substrate although octanoyl-ACP is likely to be the physiological substrate. The sequence is that of Octanoyltransferase from Histophilus somni (strain 2336) (Haemophilus somnus).